The sequence spans 532 residues: MKLAYWMYAGPAHLGTLRVASSFKNVHAIMHAPLGDDYFNVMRSMLERERDFTPVTASIVDRHVLARGSQEKVVDNITRKEKEERPDLIVLTPTCTSSILQEDLQNFVNRALTLKDSHADVLLADVNHYRVNEFQAADRTLEQIVRFYIEKAKRENFDFSKNQKISANILGVFTLGFHNMHDCRELKRLLTDLGIEINEIIPEGGNVTNLRNLPKAHFNIVPYREVGLMTAMYLKNEFQMPYISTTPMGILNTAQFIREIETLLKALTQNLSNSSNCEKFNISFAEEAAKILEKDFQKYISEQSRFVSQAAWFSRSIDCQNLTGKRAVVFGDATHAASMTKILSCEMGIRVVCSGTYCKHDADWFREQVRGFCDEILITEDHSQVGDMISRLEPAAIFGTQMERHVGKRLDIPCGVISAPVHIQNFPLGYRPFLGYEGTNQIADLVYNSFTLGMEDHLLEIFNGHDTKQILPKIQFEDGSLEWSKDALEELSRIPGFVRGKVKRNVEKFAQQNNKPFITLELMFAAKEAVNA.

Asp-36 is a binding site for [4Fe-4S] cluster. The active-site Proton donor is Asp-318. Residue 453 to 454 (GM) coordinates substrate.

It belongs to the ChlB/BchB/BchZ family. Protochlorophyllide reductase is composed of three subunits; ChlL, ChlN and ChlB. Forms a heterotetramer of two ChlB and two ChlN subunits. Requires [4Fe-4S] cluster as cofactor.

The protein resides in the plastid. The protein localises to the chloroplast. It carries out the reaction chlorophyllide a + oxidized 2[4Fe-4S]-[ferredoxin] + 2 ADP + 2 phosphate = protochlorophyllide a + reduced 2[4Fe-4S]-[ferredoxin] + 2 ATP + 2 H2O. Its pathway is porphyrin-containing compound metabolism; chlorophyll biosynthesis (light-independent). In terms of biological role, component of the dark-operative protochlorophyllide reductase (DPOR) that uses Mg-ATP and reduced ferredoxin to reduce ring D of protochlorophyllide (Pchlide) to form chlorophyllide a (Chlide). This reaction is light-independent. The NB-protein (ChlN-ChlB) is the catalytic component of the complex. The protein is Light-independent protochlorophyllide reductase subunit B of Tetradesmus obliquus (Green alga).